The primary structure comprises 629 residues: tRNA uridine 5-carboxymethylaminomethyl modification enzyme MnmG (629 aa).

Residues Gly-13–Gly-18, Val-125, and Ser-180 each bind FAD. Gly-273–Phe-287 serves as a coordination point for NAD(+). Gln-370 contributes to the FAD binding site.

It belongs to the MnmG family. In terms of assembly, homodimer. Heterotetramer of two MnmE and two MnmG subunits. Requires FAD as cofactor.

It localises to the cytoplasm. Its function is as follows. NAD-binding protein involved in the addition of a carboxymethylaminomethyl (cmnm) group at the wobble position (U34) of certain tRNAs, forming tRNA-cmnm(5)s(2)U34. In Shigella sonnei (strain Ss046), this protein is tRNA uridine 5-carboxymethylaminomethyl modification enzyme MnmG.